Here is a 303-residue protein sequence, read N- to C-terminus: Glycine--tRNA ligase alpha subunit (303 aa).

Belongs to the class-II aminoacyl-tRNA synthetase family. As to quaternary structure, tetramer of two alpha and two beta subunits.

The protein resides in the cytoplasm. The catalysed reaction is tRNA(Gly) + glycine + ATP = glycyl-tRNA(Gly) + AMP + diphosphate. The chain is Glycine--tRNA ligase alpha subunit from Erwinia tasmaniensis (strain DSM 17950 / CFBP 7177 / CIP 109463 / NCPPB 4357 / Et1/99).